The following is a 309-amino-acid chain: Homoserine kinase (309 aa).

91 to 101 (PIGSGLGSSAC) serves as a coordination point for ATP.

It belongs to the GHMP kinase family. Homoserine kinase subfamily.

It is found in the cytoplasm. The catalysed reaction is L-homoserine + ATP = O-phospho-L-homoserine + ADP + H(+). The protein operates within amino-acid biosynthesis; L-threonine biosynthesis; L-threonine from L-aspartate: step 4/5. Its function is as follows. Catalyzes the ATP-dependent phosphorylation of L-homoserine to L-homoserine phosphate. This Serratia marcescens protein is Homoserine kinase (thrB).